Here is a 1091-residue protein sequence, read N- to C-terminus: LRR receptor-like serine/threonine-protein kinase RGI3 (1091 aa).

The N-terminal stretch at methionine 1 to serine 24 is a signal peptide. Residues leucine 25–leucine 703 are Extracellular-facing. The stretch at leucine 33–proline 56 is one LRR 1 repeat. N-linked (GlcNAc...) asparagine glycosylation occurs at asparagine 40. A disulfide bridge links cysteine 57 with cysteine 64. LRR repeat units follow at residues arginine 67–serine 91, leucine 92–aspartate 115, phenylalanine 116–leucine 140, lysine 142–glycine 166, valine 168–leucine 188, asparagine 190–cysteine 213, glutamate 214–leucine 237, arginine 239–cysteine 261, threonine 262–leucine 285, lysine 287–cysteine 309, glutamate 311–lysine 332, leucine 333–cysteine 357, lysine 359–serine 383, threonine 385–cysteine 405, arginine 406–leucine 429, asparagine 431–cysteine 453, threonine 454–leucine 477, lysine 478–cysteine 501, serine 503–proline 524, lysine 525–leucine 548, threonine 549–cysteine 572, serine 574–isoleucine 596, serine 598–aspartate 620, leucine 621–leucine 644, glutamine 645–arginine 668, and arginine 669–arginine 690. A glycan (N-linked (GlcNAc...) asparagine) is linked at asparagine 104. N-linked (GlcNAc...) asparagine glycosylation occurs at asparagine 163. Short sequence motifs (small peptide recognition) lie at residues phenylalanine 173–aspartate 174, arginine 195–glycine 198, methionine 218–glutamate 223, tyrosine 246, and tyrosine 268–tyrosine 270. 2 short sequence motifs (small peptide recognition) span residues aspartate 316–glutamate 319 and glutamate 338–glutamine 340. N-linked (GlcNAc...) asparagine glycosylation occurs at asparagine 356. 2 short sequence motifs (small peptide recognition) span residues methionine 386–tryptophan 390 and aspartate 412–tyrosine 415. Asparagine 431 carries N-linked (GlcNAc...) asparagine glycosylation. The short motif at lysine 434 to leucine 438 is the Small peptide recognition element. N-linked (GlcNAc...) asparagine glycosylation occurs at asparagine 452. Residues arginine 458–arginine 460 carry the Small peptide recognition motif. N-linked (GlcNAc...) asparagine glycosylation occurs at asparagine 604. An N-linked (GlcNAc...) asparagine glycan is attached at asparagine 651. N-linked (GlcNAc...) asparagine glycosylation is present at asparagine 697. Residues threonine 704–valine 724 traverse the membrane as a helical segment. Residues arginine 725–valine 1091 lie on the Cytoplasmic side of the membrane. The 287-residue stretch at leucine 760 to valine 1046 folds into the Protein kinase domain. Residues isoleucine 766–valine 774 and lysine 788 each bind ATP. Phosphotyrosine occurs at positions 831 and 870. Aspartate 883 serves as the catalytic Proton acceptor. A Phosphotyrosine modification is found at tyrosine 933.

Belongs to the protein kinase superfamily. Ser/Thr protein kinase family. As to quaternary structure, binds to RGF peptides such as RGF1, GLV5/CLEL1/RGF2, GLV7/CLEL3/RGF3, GLV3/RGF4, GLV10/CLEL7/RGF5 and RGF10/CLELN; these interactions trigger the formation of heterodimers with SERK1, SERK2 or BAK1/SERK3 via LRR regions. Post-translationally, phosphorylated and ubiquitinated upon interaction with RGF1, thus leading to activation a subsequent degradation. In terms of processing, autophosphorylated. In terms of tissue distribution, expressed in roots.

Its subcellular location is the cell membrane. It catalyses the reaction L-seryl-[protein] + ATP = O-phospho-L-seryl-[protein] + ADP + H(+). The enzyme catalyses L-threonyl-[protein] + ATP = O-phospho-L-threonyl-[protein] + ADP + H(+). Functionally, together with RGI1, RGI2, RGI4 and RGI5, acts as a receptor of RGF peptides (e.g. RGF1, GLV5/CLEL1/RGF2, GLV7/CLEL3/RGF3, GLV3/RGF4, GLV10/CLEL7/RGF5 and RGF10/CLELN), peptide hormones which maintain the postembryonic root stem cell niche by regulating the expression levels and patterns of the transcription factor PLETHORA (PLT, e.g. PLT1 and PLT2). Links RGF peptides signal with their downstream components. The protein is LRR receptor-like serine/threonine-protein kinase RGI3 of Arabidopsis thaliana (Mouse-ear cress).